The sequence spans 392 residues: Ameloblastin (392 aa).

A signal peptide spans Met-1–Ala-26. Hydroxyproline is present on Pro-37. The residue at position 43 (Ser-43) is a Phosphoserine. Disordered stretches follow at residues Phe-86–Lys-109, Thr-247–Pro-280, and Thr-349–Pro-392. Over residues Gln-97–Lys-109 the composition is skewed to low complexity. Residues Val-359–Gln-381 are compositionally biased toward polar residues. Residues Ile-382–Pro-392 are compositionally biased toward basic and acidic residues.

Belongs to the ameloblastin family.

The protein localises to the secreted. It is found in the extracellular space. Its subcellular location is the extracellular matrix. In terms of biological role, involved in the mineralization and structural organization of enamel. The protein is Ameloblastin (AMBN) of Bos taurus (Bovine).